Reading from the N-terminus, the 200-residue chain is Adenylate kinase (200 aa).

ATP is bound at residue G10–T15. The NMP stretch occupies residues S30 to V59. Residues T31, R36, G57–V59, G85–R88, and Q92 each bind AMP. Residues K126–D142 form an LID region. R127 contacts ATP. Residues R139 and R150 each coordinate AMP. K178 serves as a coordination point for ATP.

The protein belongs to the adenylate kinase family. In terms of assembly, monomer.

It is found in the cytoplasm. The enzyme catalyses AMP + ATP = 2 ADP. Its pathway is purine metabolism; AMP biosynthesis via salvage pathway; AMP from ADP: step 1/1. Functionally, catalyzes the reversible transfer of the terminal phosphate group between ATP and AMP. Plays an important role in cellular energy homeostasis and in adenine nucleotide metabolism. This Methylorubrum populi (strain ATCC BAA-705 / NCIMB 13946 / BJ001) (Methylobacterium populi) protein is Adenylate kinase.